The primary structure comprises 333 residues: Holliday junction branch migration complex subunit RuvB (333 aa).

A large ATPase domain (RuvB-L) region spans residues 1 to 182 (MDERLLSGES…FGVLSRLEYY (182 aa)). ATP-binding positions include L21, R22, G63, K66, T67, T68, 129-131 (EDF), R172, Y182, and R219. T67 contacts Mg(2+). A small ATPAse domain (RuvB-S) region spans residues 183–253 (TVDQLSAIVE…ITQMALELLQ (71 aa)). The interval 256–333 (KLGLDHIDHK…EHFGMEMPKV (78 aa)) is head domain (RuvB-H). Residues R311 and R316 each coordinate DNA.

The protein belongs to the RuvB family. As to quaternary structure, homohexamer. Forms an RuvA(8)-RuvB(12)-Holliday junction (HJ) complex. HJ DNA is sandwiched between 2 RuvA tetramers; dsDNA enters through RuvA and exits via RuvB. An RuvB hexamer assembles on each DNA strand where it exits the tetramer. Each RuvB hexamer is contacted by two RuvA subunits (via domain III) on 2 adjacent RuvB subunits; this complex drives branch migration. In the full resolvosome a probable DNA-RuvA(4)-RuvB(12)-RuvC(2) complex forms which resolves the HJ.

Its subcellular location is the cytoplasm. It catalyses the reaction ATP + H2O = ADP + phosphate + H(+). The RuvA-RuvB-RuvC complex processes Holliday junction (HJ) DNA during genetic recombination and DNA repair, while the RuvA-RuvB complex plays an important role in the rescue of blocked DNA replication forks via replication fork reversal (RFR). RuvA specifically binds to HJ cruciform DNA, conferring on it an open structure. The RuvB hexamer acts as an ATP-dependent pump, pulling dsDNA into and through the RuvAB complex. RuvB forms 2 homohexamers on either side of HJ DNA bound by 1 or 2 RuvA tetramers; 4 subunits per hexamer contact DNA at a time. Coordinated motions by a converter formed by DNA-disengaged RuvB subunits stimulates ATP hydrolysis and nucleotide exchange. Immobilization of the converter enables RuvB to convert the ATP-contained energy into a lever motion, pulling 2 nucleotides of DNA out of the RuvA tetramer per ATP hydrolyzed, thus driving DNA branch migration. The RuvB motors rotate together with the DNA substrate, which together with the progressing nucleotide cycle form the mechanistic basis for DNA recombination by continuous HJ branch migration. Branch migration allows RuvC to scan DNA until it finds its consensus sequence, where it cleaves and resolves cruciform DNA. This Bacillus cereus (strain Q1) protein is Holliday junction branch migration complex subunit RuvB.